The sequence spans 147 residues: Hemoglobin subunit epsilon (147 aa).

Residues 3–147 (HFTAEEKVAI…VAIALGHKYH (145 aa)) enclose the Globin domain. 2 positions are modified to phosphoserine: Ser-14 and Ser-51. Positions 64 and 93 each coordinate heme b.

It belongs to the globin family. Heterotetramer of two alpha chains and two epsilon chains in early embryonic hemoglobin Gower-2; two zeta chains and two epsilon chains in early embryonic hemoglobin Gower-1. As to expression, red blood cells.

The epsilon chain is a beta-type chain of early mammalian embryonic hemoglobin. The polypeptide is Hemoglobin subunit epsilon (HBE1) (Cebus kaapori (Ka'apor capuchin)).